Consider the following 468-residue polypeptide: ATP synthase subunit beta (468 aa).

155 to 162 (GGAGVGKT) provides a ligand contact to ATP.

It belongs to the ATPase alpha/beta chains family. F-type ATPases have 2 components, CF(1) - the catalytic core - and CF(0) - the membrane proton channel. CF(1) has five subunits: alpha(3), beta(3), gamma(1), delta(1), epsilon(1). CF(0) has three main subunits: a(1), b(2) and c(9-12). The alpha and beta chains form an alternating ring which encloses part of the gamma chain. CF(1) is attached to CF(0) by a central stalk formed by the gamma and epsilon chains, while a peripheral stalk is formed by the delta and b chains.

It localises to the cell membrane. The enzyme catalyses ATP + H2O + 4 H(+)(in) = ADP + phosphate + 5 H(+)(out). In terms of biological role, produces ATP from ADP in the presence of a proton gradient across the membrane. The catalytic sites are hosted primarily by the beta subunits. The sequence is that of ATP synthase subunit beta from Streptococcus pneumoniae (strain CGSP14).